A 546-amino-acid chain; its full sequence is Probable protein kinase UbiB (546 aa).

One can recognise a Protein kinase domain in the interval 124–502; it reads DFDIQPLASA…HVRQSQSRYL (379 aa). Residues 130-138 and Lys153 each bind ATP; that span reads LASASIAQV. Asp288 serves as the catalytic Proton acceptor. A run of 2 helical transmembrane segments spans residues 501-521 and 522-542; these read YLLG…VNRP and EWGL…LVGW.

It belongs to the ABC1 family. UbiB subfamily.

It is found in the cell inner membrane. Its pathway is cofactor biosynthesis; ubiquinone biosynthesis [regulation]. Is probably a protein kinase regulator of UbiI activity which is involved in aerobic coenzyme Q (ubiquinone) biosynthesis. This chain is Probable protein kinase UbiB, found in Salmonella gallinarum (strain 287/91 / NCTC 13346).